A 291-amino-acid polypeptide reads, in one-letter code: Undecaprenyl-diphosphatase (291 aa).

The next 8 membrane-spanning stretches (helical) occupy residues 1–21 (MIIIEFIKGLILGIVEGLTEF), 48–68 (SAFTFKVVIQLGSVFAAAWVF), 100–120 (LHVLVGMIPAGILGVLFDDFI), 124–144 (LFSVPTVMIGLFLGAIYMIIA), 160–180 (INYVQAFVIGISQAVAMWPGF), 201–221 (SDFTFIMAVPIMLAASALSLV), 230–250 (AHIPFYLIGFLAAFIVGLIAI), and 270–290 (IVLVIIIAILYFGFGIGQGIS).

This sequence belongs to the UppP family.

Its subcellular location is the cell membrane. The enzyme catalyses di-trans,octa-cis-undecaprenyl diphosphate + H2O = di-trans,octa-cis-undecaprenyl phosphate + phosphate + H(+). In terms of biological role, catalyzes the dephosphorylation of undecaprenyl diphosphate (UPP). Confers resistance to bacitracin. This Staphylococcus haemolyticus (strain JCSC1435) protein is Undecaprenyl-diphosphatase.